We begin with the raw amino-acid sequence, 249 residues long: NAD kinase (249 aa).

The active-site Proton acceptor is the aspartate 49. Residues 49-50 (DG), arginine 54, 115-116 (NE), lysine 126, arginine 143, aspartate 145, isoleucine 153, 156-161 (TGYAFS), alanine 180, and glutamine 211 contribute to the NAD(+) site.

The protein belongs to the NAD kinase family. Homotetramer. The cofactor is a divalent metal cation.

The protein resides in the cytoplasm. The catalysed reaction is NAD(+) + ATP = ADP + NADP(+) + H(+). In terms of biological role, involved in the regulation of the intracellular balance between NAD(H) and NADP(H), and is a key enzyme in the biosynthesis of NADP. Catalyzes specifically the phosphorylation on 2'-hydroxyl of the adenosine moiety of NAD to yield NADP. In Archaeoglobus fulgidus (strain ATCC 49558 / DSM 4304 / JCM 9628 / NBRC 100126 / VC-16), this protein is NAD kinase.